We begin with the raw amino-acid sequence, 212 residues long: Uridine kinase (212 aa).

An ATP-binding site is contributed by 13–20 (GASASGKS).

This sequence belongs to the uridine kinase family.

Its subcellular location is the cytoplasm. It carries out the reaction uridine + ATP = UMP + ADP + H(+). It catalyses the reaction cytidine + ATP = CMP + ADP + H(+). The protein operates within pyrimidine metabolism; CTP biosynthesis via salvage pathway; CTP from cytidine: step 1/3. Its pathway is pyrimidine metabolism; UMP biosynthesis via salvage pathway; UMP from uridine: step 1/1. The chain is Uridine kinase from Shewanella amazonensis (strain ATCC BAA-1098 / SB2B).